Here is a 273-residue protein sequence, read N- to C-terminus: MDFIELLKVIFLGIVEGITEWLPISSTGHLLLVDEFLKVNLSKDFMSMFNVVIQLGAILAVVVLFFKKLWPFSKEEKNFIKKDTFTLWFKIVVACIPGIVMIPFDSKIEDLFFNPQTIATTLILYGILFIIIENRNAGKQPKVAKLSDITYQMAFMIGLFQILAMIPGTSRSGATIIGAMLFGASRYVAAEFTFFLAIPTMFGASLLKLLKFGFTFTGAEIVALITGMLTAFIVSIIVIKFLMGYIKKNNFKVFGWYRIVLGAIVAGYFLLAR.

8 helical membrane-spanning segments follow: residues 4-24 (IELL…WLPI), 45-65 (FMSM…VVLF), 84-104 (TFTL…MIPF), 112-132 (FFNP…FIII), 149-169 (ITYQ…IPGT), 187-207 (YVAA…ASLL), 219-239 (AEIV…IIVI), and 251-271 (FKVF…YFLL).

It belongs to the UppP family.

The protein localises to the cell membrane. The catalysed reaction is di-trans,octa-cis-undecaprenyl diphosphate + H2O = di-trans,octa-cis-undecaprenyl phosphate + phosphate + H(+). Its function is as follows. Catalyzes the dephosphorylation of undecaprenyl diphosphate (UPP). Confers resistance to bacitracin. This chain is Undecaprenyl-diphosphatase, found in Lachnoclostridium phytofermentans (strain ATCC 700394 / DSM 18823 / ISDg) (Clostridium phytofermentans).